The sequence spans 917 residues: Major intrinsically disordered Notch2-binding receptor 1 (917 aa).

Residues 1–892 are Cytoplasmic-facing; that stretch reads MEANQEASLF…AEFRRAKVCK (892 aa). 7 disordered regions span residues 337–367, 388–410, 461–483, 568–588, 652–687, 706–727, and 746–783; these read STYFGPTPVMGTQDTRRCPGRSSKQTPWPAK, PSEEKLRYPNSGSQTPNFSGPDR, SCTSGQHSSDTSSVGTQTEQHVL, ITNGVSSGKGDKCNRPENVHH, SEAPSDDSASPRVFRAHSGSHGPKLENSPDWCCSDA, TRPSSRSLTEENSATESKIASI, and NEEEIKDAGPANNKDWHRKSKEADRQYDIPPQHRLPKQ. Over residues 461–480 the composition is skewed to polar residues; sequence SCTSGQHSSDTSSVGTQTEQ. A compositionally biased stretch (basic and acidic residues) spans 576-588; that stretch reads KGDKCNRPENVHH. A Phosphoserine modification is found at S712. Residues 893–913 form a helical membrane-spanning segment; the sequence is IAALITAAACTVILVIVVPIC. The Extracellular segment spans residues 914 to 917; the sequence is TMKS.

Belongs to the MINAR family. In terms of assembly, interacts with NOTCH2; this interaction increases MINAR1 stability. Interacts (via N-terminus) with DEPTOR (via PDZ domain); this interaction may stabilize DEPTOR protein by impairing its ubiquitination. Expressed in brain and in islets of Langerhans.

Its subcellular location is the cell membrane. In terms of biological role, intrinsically disordered protein which may negatively regulate mTOR signaling pathway by stabilizing the mTOR complex component DEPTOR. Negatively regulates angiogenesis. Negatively regulates cell growth. Negatively regulates neurite outgrowth in hippocampal neurons. The protein is Major intrinsically disordered Notch2-binding receptor 1 (Minar1) of Mus musculus (Mouse).